We begin with the raw amino-acid sequence, 185 residues long: Peptidyl-tRNA hydrolase (185 aa).

Tyr-14 contributes to the tRNA binding site. Residue His-19 is the Proton acceptor of the active site. Residues Tyr-65, Asn-67, and Asn-113 each contribute to the tRNA site.

The protein belongs to the PTH family. As to quaternary structure, monomer.

It localises to the cytoplasm. The enzyme catalyses an N-acyl-L-alpha-aminoacyl-tRNA + H2O = an N-acyl-L-amino acid + a tRNA + H(+). Functionally, hydrolyzes ribosome-free peptidyl-tRNAs (with 1 or more amino acids incorporated), which drop off the ribosome during protein synthesis, or as a result of ribosome stalling. Catalyzes the release of premature peptidyl moieties from peptidyl-tRNA molecules trapped in stalled 50S ribosomal subunits, and thus maintains levels of free tRNAs and 50S ribosomes. This chain is Peptidyl-tRNA hydrolase, found in Rickettsia bellii (strain OSU 85-389).